The chain runs to 31 residues: Cycloviolin-A (31 aa).

The cyclopeptide (Gly-Asn) cross-link spans 1 to 31; it reads GVIPCGESCVFIPCISAAIGCSCKNKVCYRN. 3 disulfide bridges follow: C5/C21, C9/C23, and C14/C28.

This is a cyclic peptide.

Probably participates in a plant defense mechanism. Has anti-HIV activity. This Leonia cymosa (Sacha uba) protein is Cycloviolin-A.